The sequence spans 647 residues: tRNA 5-methylaminomethyl-2-thiouridine biosynthesis bifunctional protein MnmC (647 aa).

The tRNA (mnm(5)s(2)U34)-methyltransferase stretch occupies residues 1 to 235; sequence MSIPPFSQAS…KRDMLCGRFT (235 aa). The FAD-dependent cmnm(5)s(2)U34 oxidoreductase stretch occupies residues 250–647; the sequence is IGGGIAGTAS…RGLACHPLRR (398 aa).

This sequence in the N-terminal section; belongs to the methyltransferase superfamily. tRNA (mnm(5)s(2)U34)-methyltransferase family. It in the C-terminal section; belongs to the DAO family. Requires FAD as cofactor.

It is found in the cytoplasm. It carries out the reaction 5-aminomethyl-2-thiouridine(34) in tRNA + S-adenosyl-L-methionine = 5-methylaminomethyl-2-thiouridine(34) in tRNA + S-adenosyl-L-homocysteine + H(+). Functionally, catalyzes the last two steps in the biosynthesis of 5-methylaminomethyl-2-thiouridine (mnm(5)s(2)U) at the wobble position (U34) in tRNA. Catalyzes the FAD-dependent demodification of cmnm(5)s(2)U34 to nm(5)s(2)U34, followed by the transfer of a methyl group from S-adenosyl-L-methionine to nm(5)s(2)U34, to form mnm(5)s(2)U34. This Methylobacillus flagellatus (strain ATCC 51484 / DSM 6875 / VKM B-1610 / KT) protein is tRNA 5-methylaminomethyl-2-thiouridine biosynthesis bifunctional protein MnmC.